We begin with the raw amino-acid sequence, 732 residues long: Elongation factor 2 (732 aa).

One can recognise a tr-type G domain in the interval E19 to I260. GTP-binding positions include A28–T35, D94–H98, and N148–D151. H597 carries the post-translational modification Diphthamide.

Belongs to the TRAFAC class translation factor GTPase superfamily. Classic translation factor GTPase family. EF-G/EF-2 subfamily.

It localises to the cytoplasm. Catalyzes the GTP-dependent ribosomal translocation step during translation elongation. During this step, the ribosome changes from the pre-translocational (PRE) to the post-translocational (POST) state as the newly formed A-site-bound peptidyl-tRNA and P-site-bound deacylated tRNA move to the P and E sites, respectively. Catalyzes the coordinated movement of the two tRNA molecules, the mRNA and conformational changes in the ribosome. This Pyrococcus abyssi (strain GE5 / Orsay) protein is Elongation factor 2 (fusA).